The chain runs to 120 residues: C-C motif chemokine 2 (120 aa).

The signal sequence occupies residues 1–23 (MQRSSVLLCLLVIEATFCSLLMA). Gln-24 is modified (pyrrolidone carboxylic acid). Intrachain disulfides connect Cys-33-Cys-57 and Cys-34-Cys-73. The segment at 91–120 (RTQQKQNSTAPQTSKPLNIRFTTQDPKNRS) is disordered. The segment covering 93–120 (QQKQNSTAPQTSKPLNIRFTTQDPKNRS) has biased composition (polar residues). N-linked (GlcNAc...) asparagine glycosylation is present at Asn-97.

This sequence belongs to the intercrine beta (chemokine CC) family. Monomer or homodimer; in equilibrium. Is tethered on endothelial cells by glycosaminoglycan (GAG) side chains of proteoglycans. Interacts with TNFAIP6 (via Link domain). Post-translationally, processing at the N-terminus can regulate receptor and target cell selectivity. Deletion of the N-terminal residue converts it from an activator of basophil to an eosinophil chemoattractant. In terms of processing, N-Glycosylated.

The protein resides in the secreted. Its function is as follows. Acts as a ligand for C-C chemokine receptor CCR2. Signals through binding and activation of CCR2 and induces a strong chemotactic response and mobilization of intracellular calcium ions. Exhibits a chemotactic activity for monocytes and basophils but not neutrophils or eosinophils. Plays an important role in mediating peripheral nerve injury-induced neuropathic pain. Increases NMDA-mediated synaptic transmission in both dopamine D1 and D2 receptor-containing neurons, which may be caused by MAPK/ERK-dependent phosphorylation of GRIN2B/NMDAR2B. This is C-C motif chemokine 2 (CCL2) from Cavia porcellus (Guinea pig).